The following is a 401-amino-acid chain: Nodal homolog 3-A (401 aa).

The signal sequence occupies residues 1-18 (MAFLNLFFCLVFISPLMA). The propeptide occupies 19–274 (MPPVLQGRKS…KVNGFRRLRR (256 aa)). 4 N-linked (GlcNAc...) asparagine glycosylation sites follow: Asn168, Asn337, Asn341, and Asn344. 2 disulfides stabilise this stretch: Cys299–Cys365 and Cys328–Cys396.

This sequence belongs to the TGF-beta family. In terms of assembly, monomer. The propeptide region interacts with bmp4 in a non-covalent manner. In terms of tissue distribution, expressed in the epithelial layer of the Spemann organizer during gastrulation.

Its subcellular location is the secreted. In terms of biological role, exhibits mesoderm-dorsalizing activity and neural-inducing activity, but lacks mesoderm-inducing activity. Regulates the expression of specific mesodermal and neural genes. Induces convergent extension movements at the embryonic midline by activating the fgf signaling pathway to induce t/bra expression in the organizer region. Acts with wnt11 to induce Spemann organizer cells and induce axis formation. The unprocessed protein antagonizes bmp-signaling. The polypeptide is Nodal homolog 3-A (nodal3-a) (Xenopus laevis (African clawed frog)).